The chain runs to 267 residues: Placental prolactin-related protein 2 (267 aa).

2 N-linked (GlcNAc...) asparagine glycosylation sites follow: N99 and N121. 2 disulfides stabilise this stretch: C126–C244 and C261–C267.

Belongs to the somatotropin/prolactin family.

The protein localises to the secreted. Placental prolactin-related proteins may play a specific role during gestation. In Bos taurus (Bovine), this protein is Placental prolactin-related protein 2 (PRP2).